The chain runs to 211 residues: Phosphoserine phosphatase 1 (211 aa).

His-9 functions as the Tele-phosphohistidine intermediate in the catalytic mechanism. His-150 is a catalytic residue.

This sequence belongs to the histidine phosphatase superfamily. Metal-independent phosphoserine phosphatase family. Homodimer. Can also form a heterodimer with PspB.

The enzyme catalyses O-phospho-L-serine + H2O = L-serine + phosphate. It carries out the reaction O-phospho-D-serine + H2O = D-serine + phosphate. Its pathway is amino-acid biosynthesis; L-serine biosynthesis; L-serine from 3-phospho-D-glycerate: step 3/3. Activity is not inhibited by EDTA in vitro, nor enhanced by the addition of Mg(2+). Catalyzes the dephosphorylation of L-phosphoserine to serine and inorganic phosphate. Is poorly or not active toward D-phosphoserine, DL-phosphothreonine, 3-phosphoglycerate, para-nitrophenylphosphate, and fructose-6-phosphate. Does not display phosphoglycerate mutase activity. The chain is Phosphoserine phosphatase 1 (pspA) from Hydrogenobacter thermophilus (strain DSM 6534 / IAM 12695 / TK-6).